Consider the following 149-residue polypeptide: MSMVSEFKEFALKGNVMDLAVGVIIGGAFATITKSLVEDVIMPIVAFIVGGEINFKNMFLILGDAPEGVARTNDALKAAGIPVLAYGSFITVLINFLILAFIIFMMVKMVNRLRRADEVEEAIEEAIEEPSEEVQLLREISAKLGNINK.

3 consecutive transmembrane segments (helical) span residues 10–30 (FALK…GAFA), 41–61 (IMPI…MFLI), and 87–107 (GSFI…FMMV).

It belongs to the MscL family. As to quaternary structure, homopentamer.

It localises to the cell inner membrane. Its function is as follows. Channel that opens in response to stretch forces in the membrane lipid bilayer. May participate in the regulation of osmotic pressure changes within the cell. The polypeptide is Large-conductance mechanosensitive channel (Psychrobacter cryohalolentis (strain ATCC BAA-1226 / DSM 17306 / VKM B-2378 / K5)).